The sequence spans 261 residues: MSESLHLTRNGSILEITLDRPKANAIDAKTSFEMGEVFLNFRDDPQLRVAIITGAGEKFFSAGWDLKAAAEGEAPDADFGPGGFAGLTEIFNLDKPVIAAVNGYAFGGGFELALAADFIVCADNASFALPEAKLGIVPDSGGVLRLPKILPPAIVNEMVMTGRRMGAEEALRWGVVNRVVSQAELMDNARELAQQLVNSAPLAIAALKEIYRTTSEMPVEEAYRYIRSGVLKNYPSVLHSEDAIEGPLAFAEKRDPVWKGR.

Glu111 functions as the Nucleophile in the catalytic mechanism. Glu131 (proton acceptor) is an active-site residue.

Belongs to the enoyl-CoA hydratase/isomerase family.

The catalysed reaction is (R)-carnitinyl-CoA = crotonobetainyl-CoA + H2O. It participates in amine and polyamine metabolism; carnitine metabolism. Its function is as follows. Catalyzes the reversible dehydration of L-carnitinyl-CoA to crotonobetainyl-CoA. The protein is Carnitinyl-CoA dehydratase of Escherichia coli (strain SMS-3-5 / SECEC).